A 62-amino-acid chain; its full sequence is uncharacterized protein (62 aa).

A signal peptide spans 1–22; it reads MVNVALLLDQIIATPLRSMVEA.

This is an uncharacterized protein from Archaeoglobus fulgidus (strain ATCC 49558 / DSM 4304 / JCM 9628 / NBRC 100126 / VC-16).